The following is a 248-amino-acid chain: MAKPEYYYGVHSVESLLELEPERVLTLFTLKGRDDQRLQKILELAEPFGISVQKASRDSLEKLAGLPFHQGVVAAVRPHPVLNEKDLDQLLQNNDQALLLALDQVTDPHNLGACIRTAAAMGIAAVIVPRDRSASLTPTARKVAAGGAEKVKFIQVTNLARTLAHIKAHFFVKVVGTMLDEKALPIQKYDFSGNVAIVMGAEDTGLRPITQSQCDQTVYIPMSGNLQSLNVSVAAGMALYEACRQRLG.

Positions 200, 220, and 229 each coordinate S-adenosyl-L-methionine.

The protein belongs to the class IV-like SAM-binding methyltransferase superfamily. RNA methyltransferase TrmH family. RlmB subfamily.

It is found in the cytoplasm. The enzyme catalyses guanosine(2251) in 23S rRNA + S-adenosyl-L-methionine = 2'-O-methylguanosine(2251) in 23S rRNA + S-adenosyl-L-homocysteine + H(+). Its function is as follows. Specifically methylates the ribose of guanosine 2251 in 23S rRNA. In Acinetobacter baylyi (strain ATCC 33305 / BD413 / ADP1), this protein is 23S rRNA (guanosine-2'-O-)-methyltransferase RlmB.